Reading from the N-terminus, the 35-residue chain is Photosystem II reaction center protein M (35 aa).

Residues 5-25 (ILAFIATALFIIIPTAFLLIL) traverse the membrane as a helical segment.

It belongs to the PsbM family. As to quaternary structure, PSII is composed of 1 copy each of membrane proteins PsbA, PsbB, PsbC, PsbD, PsbE, PsbF, PsbH, PsbI, PsbJ, PsbK, PsbL, PsbM, PsbT, PsbX, PsbY, PsbZ, Psb30/Ycf12, at least 3 peripheral proteins of the oxygen-evolving complex and a large number of cofactors. It forms dimeric complexes.

It localises to the plastid. The protein localises to the chloroplast thylakoid membrane. Its function is as follows. One of the components of the core complex of photosystem II (PSII). PSII is a light-driven water:plastoquinone oxidoreductase that uses light energy to abstract electrons from H(2)O, generating O(2) and a proton gradient subsequently used for ATP formation. It consists of a core antenna complex that captures photons, and an electron transfer chain that converts photonic excitation into a charge separation. This subunit is found at the monomer-monomer interface. This is Photosystem II reaction center protein M from Chara vulgaris (Common stonewort).